Consider the following 126-residue polypeptide: Putative 15 kDa capsid protein (126 aa).

The protein localises to the virion. This Bombyx mori nuclear polyhedrosis virus (BmNPV) protein is Putative 15 kDa capsid protein (P15).